The sequence spans 194 residues: GTP cyclohydrolase 1 (194 aa).

Residues Cys-83, His-86, and Cys-155 each contribute to the Zn(2+) site.

The protein belongs to the GTP cyclohydrolase I family. In terms of assembly, toroid-shaped homodecamer, composed of two pentamers of five dimers.

The enzyme catalyses GTP + H2O = 7,8-dihydroneopterin 3'-triphosphate + formate + H(+). It functions in the pathway cofactor biosynthesis; 7,8-dihydroneopterin triphosphate biosynthesis; 7,8-dihydroneopterin triphosphate from GTP: step 1/1. The sequence is that of GTP cyclohydrolase 1 (folE) from Streptococcus pyogenes.